We begin with the raw amino-acid sequence, 539 residues long: Protein PNS1 (539 aa).

Residues 1–38 are disordered; it reads MPLNEKYERPPQPPPAYDPNHRPPSSSENSAAANVNDG. Over 1–81 the chain is Cytoplasmic; that stretch reads MPLNEKYERP…NDNKPRWNDW (81 aa). The segment covering 25–36 has biased composition (low complexity); sequence SSSENSAAANVN. A helical transmembrane segment spans residues 82–102; it reads PFTIFFLCTVGGFIAIAAITL. Over 103-129 the chain is Extracellular; sequence RAWSQTYSSTGSGIYDGVNTGTLNTNA. A helical membrane pass occupies residues 130 to 150; that stretch reads AILLVFVCIIALVFSVLGLTL. Residues 151–157 are Cytoplasmic-facing; the sequence is CRIFPKQ. The helical transmembrane segment at 158-178 threads the bilayer; that stretch reads FIYCGMVINLVASLGTAIMYM. Residues 179–182 are Extracellular-facing; sequence SLRY. The helical transmembrane segment at 183 to 203 threads the bilayer; sequence WSAGIVFLVFTFMTAWCYWGM. Topologically, residues 204 to 226 are cytoplasmic; sequence RSRIPLSVAVLKVVVDAMKKCPQ. A helical membrane pass occupies residues 227–247; sequence IFFVSFVGALVASAFGFLFSA. The Extracellular segment spans residues 248-274; that stretch reads VIVATYIKYDPNSSNGGCDVSGGSCSH. The N-linked (GlcNAc...) asparagine glycan is linked to N259. A helical transmembrane segment spans residues 275 to 295; that stretch reads SKLIGVLVVVFFCGYYISEVI. The Cytoplasmic portion of the chain corresponds to 296-332; that stretch reads RNVIHCVISGVFGSWYYMSKSDQGMPRWPAFGALKRA. The helical transmembrane segment at 333–353 threads the bilayer; sequence MTYSFGSICFGSLLVALIDLL. Topologically, residues 354-371 are extracellular; that stretch reads RQILQMIRHDVTSSGGGQ. Residues 372–392 traverse the membrane as a helical segment; sequence IAIQILFMVFDWIIGFLKWLA. At 393 to 436 the chain is on the cytoplasmic side; sequence EYFNHYAYSFIALYGKPYLRAAKETWYMLREKGMDALINDNLIN. Residues 437–457 form a helical membrane-spanning segment; that stretch reads IALGLFSMFASYMTALFTFLY. Topologically, residues 458–473 are extracellular; sequence LRFTSPQYNSNGAYNG. A helical transmembrane segment spans residues 474-494; that stretch reads ALMAFSFVIALQICNIATEAI. At 495–539 the chain is on the cytoplasmic side; sequence RSGTATFFVALGNDPEVFHHSYPHRFDEIFRAYPDVLRKLSHQNV.

This sequence belongs to the CTL (choline transporter-like) family.

Its subcellular location is the cell membrane. Probably involved in transport through the plasma membrane. The sequence is that of Protein PNS1 (PNS1) from Saccharomyces cerevisiae (strain ATCC 204508 / S288c) (Baker's yeast).